The sequence spans 319 residues: Coproporphyrin III ferrochelatase 2 (319 aa).

Residues Tyr13, Arg30, 46–47 (RY), Ser54, and Tyr125 contribute to the Fe-coproporphyrin III site. Fe(2+) is bound by residues His181 and Glu262.

It belongs to the ferrochelatase family.

The protein resides in the cytoplasm. The enzyme catalyses Fe-coproporphyrin III + 2 H(+) = coproporphyrin III + Fe(2+). The protein operates within porphyrin-containing compound metabolism; protoheme biosynthesis. Involved in coproporphyrin-dependent heme b biosynthesis. Catalyzes the insertion of ferrous iron into coproporphyrin III to form Fe-coproporphyrin III. The polypeptide is Coproporphyrin III ferrochelatase 2 (Bacillus cereus (strain ATCC 14579 / DSM 31 / CCUG 7414 / JCM 2152 / NBRC 15305 / NCIMB 9373 / NCTC 2599 / NRRL B-3711)).